The sequence spans 120 residues: PYEKIGAELVKEVAKKTDDVAGDGTTTATVLAQALVKEGLRNVAAGANPLSLKRGIEKAVEKVTETLLKSAKEVETKDQIAATAAISAGDQSIGDLIAEAMDKVGNEGVITVEESNTFGL.

23–27 (DGTTT) serves as a coordination point for ATP.

It belongs to the chaperonin (HSP60) family. Forms a cylinder of 14 subunits composed of two heptameric rings stacked back-to-back. Interacts with the co-chaperonin GroES.

It is found in the cytoplasm. It carries out the reaction ATP + H2O + a folded polypeptide = ADP + phosphate + an unfolded polypeptide.. In terms of biological role, together with its co-chaperonin GroES, plays an essential role in assisting protein folding. The GroEL-GroES system forms a nano-cage that allows encapsulation of the non-native substrate proteins and provides a physical environment optimized to promote and accelerate protein folding. This Mycobacterium scrofulaceum protein is Chaperonin GroEL.